Consider the following 380-residue polypeptide: Glutamate 5-kinase (380 aa).

Residue Lys-20 coordinates ATP. Residues Ser-59, Asp-146, and Asn-158 each coordinate substrate. 220-226 (TGGMYSK) is a binding site for ATP. Residues 285–363 (SGTVTVDEGA…HEVAAILGDA (79 aa)) enclose the PUA domain.

This sequence belongs to the glutamate 5-kinase family.

It localises to the cytoplasm. The enzyme catalyses L-glutamate + ATP = L-glutamyl 5-phosphate + ADP. Its pathway is amino-acid biosynthesis; L-proline biosynthesis; L-glutamate 5-semialdehyde from L-glutamate: step 1/2. Functionally, catalyzes the transfer of a phosphate group to glutamate to form L-glutamate 5-phosphate. This Nitratidesulfovibrio vulgaris (strain ATCC 29579 / DSM 644 / CCUG 34227 / NCIMB 8303 / VKM B-1760 / Hildenborough) (Desulfovibrio vulgaris) protein is Glutamate 5-kinase.